A 1546-amino-acid chain; its full sequence is Lysophospholipase NTE1 (1546 aa).

Residues 1–45 (MKDSTEALNSIAFAVDTTLSSILPSSLAPPSAPPATSSFLKSIWY) are Cytoplasmic-facing. A helical transmembrane segment spans residues 46 to 66 (AFWWLWSMVVFKIMNIILLYI). The Lumenal segment spans residues 67–81 (PSKIMNALSINFEIT). The chain crosses the membrane as a helical span at residues 82 to 102 (LNLSSILVALSAIITVCFLVV). Residues 103 to 1546 (RYKYLTGYSK…KKVLYRRNSI (1444 aa)) are Cytoplasmic-facing. Residues 689–820 (PTEF…LKKL) and 816–965 (KLKK…VASK) contribute to the a nucleoside 3',5'-cyclic phosphate site. The PNPLA domain occupies 1239–1403 (LVLGGGGSRG…LDNLPVSEMK (165 aa)). Positions 1243 to 1248 (GGGSRG) match the GXGXXG motif. The GXSXG signature appears at 1270–1274 (GTSIG). S1272 serves as the catalytic Nucleophile. D1390 functions as the Proton acceptor in the catalytic mechanism. Positions 1390 to 1392 (DGG) match the DGA/G motif.

The protein belongs to the NTE family.

Its subcellular location is the endoplasmic reticulum membrane. It catalyses the reaction a 1-acyl-sn-glycero-3-phosphocholine + H2O = sn-glycerol 3-phosphocholine + a fatty acid + H(+). Its activity is regulated as follows. Inhibited by organophosphorus esters. Intracellular phospholipase B that catalyzes the double deacylation of phosphatidylcholine (PC) to glycerophosphocholine (GroPCho). Plays an important role in membrane lipid homeostasis. Responsible for the rapid PC turnover in response to inositol, elevated temperatures, or when choline is present in the growth medium. This Scheffersomyces stipitis (strain ATCC 58785 / CBS 6054 / NBRC 10063 / NRRL Y-11545) (Yeast) protein is Lysophospholipase NTE1 (NTE1).